Reading from the N-terminus, the 308-residue chain is Tryptophan 2,3-dioxygenase (308 aa).

The tract at residues 1–37 is disordered; the sequence is MKPPGDNAPAGCPFSGARAAQPAHEAPHVPGDAAGET. Substrate contacts are provided by residues 77–81, Y139, and R143; that span reads FIIQH. Residue H266 coordinates heme. T280 is a substrate binding site.

Belongs to the tryptophan 2,3-dioxygenase family. In terms of assembly, homotetramer. It depends on heme as a cofactor.

It carries out the reaction L-tryptophan + O2 = N-formyl-L-kynurenine. The protein operates within amino-acid degradation; L-tryptophan degradation via kynurenine pathway; L-kynurenine from L-tryptophan: step 1/2. In terms of biological role, heme-dependent dioxygenase that catalyzes the oxidative cleavage of the L-tryptophan (L-Trp) pyrrole ring and converts L-tryptophan to N-formyl-L-kynurenine. Catalyzes the oxidative cleavage of the indole moiety. This Burkholderia ambifaria (strain MC40-6) protein is Tryptophan 2,3-dioxygenase.